Consider the following 98-residue polypeptide: NADH-ubiquinone oxidoreductase chain 4L (98 aa).

The next 3 helical transmembrane spans lie at 1-21 (MTTI…GVLI), 26-46 (LLST…LMAL), and 59-79 (APLI…ALLV).

Belongs to the complex I subunit 4L family. Core subunit of respiratory chain NADH dehydrogenase (Complex I) which is composed of 45 different subunits.

The protein localises to the mitochondrion inner membrane. It catalyses the reaction a ubiquinone + NADH + 5 H(+)(in) = a ubiquinol + NAD(+) + 4 H(+)(out). In terms of biological role, core subunit of the mitochondrial membrane respiratory chain NADH dehydrogenase (Complex I) which catalyzes electron transfer from NADH through the respiratory chain, using ubiquinone as an electron acceptor. Part of the enzyme membrane arm which is embedded in the lipid bilayer and involved in proton translocation. This is NADH-ubiquinone oxidoreductase chain 4L (MT-ND4L) from Rhyncholestes raphanurus (Chilean shrew opossum).